We begin with the raw amino-acid sequence, 91 residues long: MDTYAIISFLLGIAFGFLRRGKEDRAKIIEVIFVSLLLGLVSGIALSHAVLDGAGWGEFVKAFGLIVAALIYAIFFAAGTYLGDLLEKLRK.

The next 3 membrane-spanning stretches (helical) occupy residues 4–21 (YAII…LRRG), 28–50 (IIEV…SHAV), and 60–82 (VKAF…GTYL).

It is found in the cell membrane. This is an uncharacterized protein from Archaeoglobus fulgidus (strain ATCC 49558 / DSM 4304 / JCM 9628 / NBRC 100126 / VC-16).